A 354-amino-acid chain; its full sequence is Malate dehydrogenase 2, peroxisomal (354 aa).

Positions 10 to 18 are peroxisomal targeting signal PTS2; that stretch reads RIARISAHL. Residues 49–55 and Asp-75 each bind NAD(+); that span reads GAAGGIG. Arg-122 and Arg-128 together coordinate substrate. Residues Asn-135 and 158 to 160 contribute to the NAD(+) site; that span reads ISN. Positions 160 and 194 each coordinate substrate. The Proton acceptor role is filled by His-218. Residue Met-269 participates in NAD(+) binding.

It belongs to the LDH/MDH superfamily. MDH type 1 family. As to quaternary structure, homodimer. In terms of tissue distribution, expressed in rosette leaves.

It is found in the peroxisome. The enzyme catalyses (S)-malate + NAD(+) = oxaloacetate + NADH + H(+). Catalyzes a reversible NAD-dependent dehydrogenase reaction involved in central metabolism and redox homeostasis between organelle compartments. Peroxisomal NAD-dependent malate dehydrogenase involved in fatty acid beta-oxidation. Reoxidizes NADH from the beta-oxidation and provides NAD for the conversion of fatty acyl-CoA to acetyl-CoA. Does not participate directly in the glyoxylate cycle. Required for maintenance of photosynthetic rates under photorespiratory conditions, and carbon flow during photorespiration. Supplies NADH reductant to the peroxisomal hydroxypyruvate reductase (HPR), which reduces hydroxypyruvate into glycerate in the photorespiratory cycle. The sequence is that of Malate dehydrogenase 2, peroxisomal from Arabidopsis thaliana (Mouse-ear cress).